Here is a 232-residue protein sequence, read N- to C-terminus: Golgi SNAP receptor complex member 1 (232 aa).

Topologically, residues 1–211 are cytoplasmic; that stretch reads MGGSSYDVLR…QRINIKKRRD (211 aa). Coiled coils occupy residues 6-23 and 52-80; these read YDVL…IDLK and GEHV…MSDL. The chain crosses the membrane as a helical; Anchor for type IV membrane protein span at residues 212–232; sequence SLILGAVIGFCVILLLLYAFN.

Belongs to the GOSR1 family. Component of several multiprotein Golgi SNARE complexes.

The protein resides in the golgi apparatus membrane. Functionally, involved in transport from the ER to the Golgi apparatus as well as in intra-Golgi transport. It belongs to a super-family of proteins called t-SNAREs or soluble NSF (N-ethylmaleimide-sensitive factor) attachment protein receptor. The chain is Golgi SNAP receptor complex member 1 (Gos28) from Drosophila melanogaster (Fruit fly).